A 620-amino-acid chain; its full sequence is 1-deoxy-D-xylulose-5-phosphate synthase (620 aa).

Thiamine diphosphate contacts are provided by residues His-75 and Ala-116–Ser-118. A Mg(2+)-binding site is contributed by Asp-147. Thiamine diphosphate is bound by residues Gly-148 to Ala-149, Asn-177, Tyr-284, and Glu-366. Mg(2+) is bound at residue Asn-177.

Belongs to the transketolase family. DXPS subfamily. Homodimer. Mg(2+) is required as a cofactor. It depends on thiamine diphosphate as a cofactor.

It catalyses the reaction D-glyceraldehyde 3-phosphate + pyruvate + H(+) = 1-deoxy-D-xylulose 5-phosphate + CO2. Its pathway is metabolic intermediate biosynthesis; 1-deoxy-D-xylulose 5-phosphate biosynthesis; 1-deoxy-D-xylulose 5-phosphate from D-glyceraldehyde 3-phosphate and pyruvate: step 1/1. Its function is as follows. Catalyzes the acyloin condensation reaction between C atoms 2 and 3 of pyruvate and glyceraldehyde 3-phosphate to yield 1-deoxy-D-xylulose-5-phosphate (DXP). This is 1-deoxy-D-xylulose-5-phosphate synthase from Bordetella bronchiseptica (strain ATCC BAA-588 / NCTC 13252 / RB50) (Alcaligenes bronchisepticus).